The following is a 976-amino-acid chain: MERRWPLGLGLVLLLCAPLPPGARAKEVTLMDTSKAQGELGWLLDPPKDGWSEQQQILNGTPLYMYQDCPMQGRRDTDHWLRSNWIYRGEEASRVHVELQFTVRDCKSFPGGAGPLGCKETFNLLYMESDQDVGIQLRRPLFQKVTTVAADQSFTIRDLVSGSVKLNVERCSLGRLTRRGLYLAFHNPGACVALVSVRVFYQRCPETLNGLAQFPDTLPGPAGLVEVAGTCLPHARASPRPSGAPRMHCSPDGEWLVPVGRCHCEPGYEEGGSGEACVACPSGSYRMDMDTPHCLTCPQQSTAESEGATICTCESGHYRAPGEGPQVACTGPPSAPRNLSFSASGTQLSLRWEPPADTGGRQDVRYSVRCSQCQGTAQDGGPCQPCGVGVHFSPGARGLTTPAVHVNGLEPYANYTFNVEAQNGVSGLGSSGHASTSVSISMGHAESLSGLSLRLVKKEPRQLELTWAGSRPRSPGANLTYELHVLNQDEERYQMVLEPRVLLTELQPDTTYIVRVRMLTPLGPGPFSPDHEFRTSPPVSRGLTGGEIVAVIFGLLLGAALLLGILVFRSRRAQRQRQQRQRDRATDVDREDKLWLKPYVDLQAYEDPAQGALDFTRELDPAWLMVDTVIGEGEFGEVYRGTLRLPSQDCKTVAIKTLKDTSPGGQWWNFLREATIMGQFSHPHILHLEGVVTKRKPIMIITEFMENGALDAFLREREDQLVPGQLVAMLQGIASGMNYLSNHNYVHRDLAARNILVNQNLCCKVSDFGLTRLLDDFDGTYETQGGKIPIRWTAPEAIAHRIFTTASDVWSFGIVMWEVLSFGDKPYGEMSNQEVMKSIEDGYRLPPPVDCPAPLYELMKNCWAYDRARRPHFQKLQAHLEQLLANPHSLRTIANFDPRMTLRLPSLSGSDGIPYRTVSEWLESIRMKRYILHFHSAGLDTMECVLELTAEDLTQMGITLPGHQKRILCSIQGFKD.

Positions 1–25 (MERRWPLGLGLVLLLCAPLPPGARA) are cleaved as a signal peptide. Residues 26-547 (KEVTLMDTSK…PVSRGLTGGE (522 aa)) lie on the Extracellular side of the membrane. Residues 27 to 209 (EVTLMDTSKA…FYQRCPETLN (183 aa)) form the Eph LBD domain. Fibronectin type-III domains follow at residues 332 to 445 (PPSA…MGHA) and 447 to 538 (SLSG…TSPP). A glycan (N-linked (GlcNAc...) asparagine) is linked at N414. The chain crosses the membrane as a helical span at residues 548-568 (IVAVIFGLLLGAALLLGILVF). The Cytoplasmic segment spans residues 569–976 (RSRRAQRQRQ…ILCSIQGFKD (408 aa)). Residues Y599 and Y605 each carry the phosphotyrosine; by autocatalysis modification. A Protein kinase domain is found at 624 to 884 (LMVDTVIGEG…KLQAHLEQLL (261 aa)). Residues 630–638 (IGEGEFGEV) and K656 contribute to the ATP site. The Proton acceptor role is filled by D749. Residue Y781 is modified to Phosphotyrosine; by autocatalysis. Residues S906 and S910 each carry the phosphoserine modification. The region spanning 913–976 (IPYRTVSEWL…ILCSIQGFKD (64 aa)) is the SAM domain. Phosphotyrosine; by autocatalysis is present on Y930. The PDZ-binding motif lies at 974–976 (FKD).

Belongs to the protein kinase superfamily. Tyr protein kinase family. Ephrin receptor subfamily. Homodimer. Forms a signaling complex with LCK; PTK2B/PYK2 and PI3-kinase upon activation by EFNA1; regulates T-lymphocytes migration. Interacts (via SAM domain) with ILK (via ANK repeats); stimulated by EFNA1 but independent of the kinase activity of EPHA1. Interacts (kinase activity-dependent) with PTK2/FAK1. Post-translationally, phosphorylated. Autophosphorylation is stimulated by its ligand EFNA1. Ubiquitinated. In terms of tissue distribution, overexpressed in several carcinomas.

The protein resides in the cell membrane. It catalyses the reaction L-tyrosyl-[protein] + ATP = O-phospho-L-tyrosyl-[protein] + ADP + H(+). Functionally, receptor tyrosine kinase which binds promiscuously membrane-bound ephrin-A family ligands residing on adjacent cells, leading to contact-dependent bidirectional signaling into neighboring cells. The signaling pathway downstream of the receptor is referred to as forward signaling while the signaling pathway downstream of the ephrin ligand is referred to as reverse signaling. Binds with a low affinity EFNA3 and EFNA4 and with a high affinity to EFNA1 which most probably constitutes its cognate/functional ligand. Upon activation by EFNA1 induces cell attachment to the extracellular matrix inhibiting cell spreading and motility through regulation of ILK and downstream RHOA and RAC. Also plays a role in angiogenesis and regulates cell proliferation. May play a role in apoptosis. The protein is Ephrin type-A receptor 1 (EPHA1) of Homo sapiens (Human).